A 739-amino-acid chain; its full sequence is MPSPRPVLLRGARAALLLLLPPRLLARPSLLLRRSLSAASCPPISLPAAASRSSMDGAGAEEVLAPLRLAVRQQGDLVRKLKEDKAPQVDVDKAVAELKARKRVLEAKELALQPKDDIVDRAKMEDTLKRRFFYDQAFAIYGGVSGLYDFGPVGCALKNNIIQTWRQHFIQEEQILEIDCTMLTPEPVLKTSGHVDKFADFMVKDVKNGECFRADHLLKAHLQKLMSDKKCSVEKKSEMESVLAQLDNYGQQELADLFVNYNVKSPITGNDLSPPVSFNLMFKTFIGPGGNMPGYLRPETAQGIFLNFKRLLEFNQGKLPFAAAQIGNSFRNEISPRSGLIRVREFTMAEIEHFVDPSEKDHPKFQNVADLHLYLYSAKAQVSGQSARKMRLGDAVEQGVINNTVLGYFIGRIYLYLTKVGISPDKLRFRQHMENEMAHYACDCWDAESKTSYGWIEIVGCADRSCYDLSCHARATKVPLVAEKPLKEPKTVNVVQFEPSKGAIGKAYKKDAKLVMEYLAICDECYITEMEMLLNEKGEFTIETEGKTFQLTKDMINVKRFQKTLYVEEVVPNVIEPSFGLGRIMYTVFEHTFHVREGDEQRTFFSFPAVVAPFKCSVLPLSQNQEFMPFVKELSEALTRHGVSHKVDDSSGSIGRRYARTDEIGVAFGVTIDFDTVNKTPHTATLRDRDSMRQIRAEISELPSIVQDLANGNITWADVEARYPLFEGQETGKKETIEE.

The transit peptide at 1–36 (MPSPRPVLLRGARAALLLLLPPRLLARPSLLLRRSL) directs the protein to the mitochondrion. At Ser-35 the chain carries Phosphoserine. One can recognise a WHEP-TRS domain in the interval 63-119 (VLAPLRLAVRQQGDLVRKLKEDKAPQVDVDKAVAELKARKRVLEAKELALQPKDDIV). Lys-204 is subject to N6-acetyllysine. Glu-299 contacts glycine. ATP is bound by residues 331 to 333 (RNE) and 342 to 343 (RV). Glu-350 contacts glycine. Tyr-453 is subject to Phosphotyrosine. Position 457–458 (457–458 (EI)) interacts with ATP. Lys-501 carries the post-translational modification N6-acetyllysine. 576-578 (EPS) contributes to the glycine binding site. Arg-583 lines the ATP pocket. Residue Ser-700 is modified to Phosphoserine. Position 736 is a phosphothreonine (Thr-736).

It belongs to the class-II aminoacyl-tRNA synthetase family. Homodimer. In terms of tissue distribution, widely expressed, including in brain and spinal cord. Expressed in brain, spinal cord, muscle, heart and spleen. As to expression, expressed in brain, spinal cord, muscle, heart, spleen and liver.

The protein resides in the cytoplasm. The protein localises to the cell projection. It localises to the axon. Its subcellular location is the secreted. It is found in the extracellular exosome. The protein resides in the mitochondrion. It catalyses the reaction tRNA(Gly) + glycine + ATP = glycyl-tRNA(Gly) + AMP + diphosphate. The catalysed reaction is 2 ATP + H(+) = P(1),P(4)-bis(5'-adenosyl) tetraphosphate + diphosphate. With respect to regulation, ap4A synthesis is inhibited by tRNA, via the disruption of the second ATP-binding site by direct blocking and/or by tRNA-induced conformational change. In terms of biological role, catalyzes the ATP-dependent ligation of glycine to the 3'-end of its cognate tRNA, via the formation of an aminoacyl-adenylate intermediate (Gly-AMP). Also produces diadenosine tetraphosphate (Ap4A), a universal pleiotropic signaling molecule needed for cell regulation pathways, by direct condensation of 2 ATPs. Thereby, may play a special role in Ap4A homeostasis. The chain is Glycine--tRNA ligase from Homo sapiens (Human).